Reading from the N-terminus, the 126-residue chain is UPF0102 protein DNO_0639 (126 aa).

Belongs to the UPF0102 family.

The chain is UPF0102 protein DNO_0639 from Dichelobacter nodosus (strain VCS1703A).